Consider the following 167-residue polypeptide: Lipoprotein signal peptidase (167 aa).

A run of 3 helical transmembrane segments spans residues 7–27, 61–81, and 87–107; these read LFLL…KYWV, FSHW…LWLW, and NKFL…GNLI. Active-site residues include aspartate 117 and aspartate 136. A helical membrane pass occupies residues 126 to 146; that stretch reads IFYFAIFNLADSFITLGVIVI.

This sequence belongs to the peptidase A8 family.

It localises to the cell inner membrane. It carries out the reaction Release of signal peptides from bacterial membrane prolipoproteins. Hydrolyzes -Xaa-Yaa-Zaa-|-(S,diacylglyceryl)Cys-, in which Xaa is hydrophobic (preferably Leu), and Yaa (Ala or Ser) and Zaa (Gly or Ala) have small, neutral side chains.. Its pathway is protein modification; lipoprotein biosynthesis (signal peptide cleavage). In terms of biological role, this protein specifically catalyzes the removal of signal peptides from prolipoproteins. The protein is Lipoprotein signal peptidase of Bartonella tribocorum (strain CIP 105476 / IBS 506).